A 482-amino-acid chain; its full sequence is Nicotine dehydrogenase (482 aa).

Positions M1 to A38 form a signal peptide, tat-type signal. Residues A64, E83, A84, R85, R91, W108, and V279 each coordinate FAD. T381 contributes to the (S)-nicotine binding site. FAD is bound by residues A453, N462, and I463.

This sequence belongs to the flavin monoamine oxidase family. As to quaternary structure, monomer in solution. Homodimer in solution. Forms homodimers in the crystal. FAD serves as cofactor. Predicted to be exported by the Tat system. The position of the signal peptide cleavage has not been experimentally proven.

It is found in the periplasm. It carries out the reaction (S)-nicotine + 2 Fe(III)-[cytochrome c] = N-methylmyosmine + 2 Fe(II)-[cytochrome c] + 2 H(+). The protein operates within alkaloid degradation; nicotine degradation. The catalytic rate is not significantly affected by pH. Involved in nicotine degradation. Catalyzes the conversion of nicotine to N-methylmyosmine. N-methylmyosmine undergoes spontaneous hydrolysis to form pseudooxynicotine (PN). S-nicotine is the optimal substrate. Has lower activity with some nicotine analogs, but shows no activity towards neurotransmitters, including serotonin, dopamine, and norepinephrine, nicotine metabolites and common neuroactive drugs. The enzyme is stereospecific with poor activity with (R)-nicotine as the substrate. The c-type cytochrome protein CycN is the physiological electron acceptor. O(2) is a poor electron acceptor. The chain is Nicotine dehydrogenase from Pseudomonas putida (strain DSM 28022 / S16).